The following is a 917-amino-acid chain: MCRPALARLLLLQLLLLKLYLGKGAMKECDKDQFQCRNERCIPAVWACDEDNDCSDNSDEADCPKKTCAETDFACDNGHCIPDRWKCDGEEECSDGSDESEAACTKQVCPAEKISCGDLSNKCIPSSWRCDGQKDCESGIDEAGCAPACSPDEFQCSNKTCISINFVCDGYNNCGDGSDEKKCSPLTCSPNEFQCNNSVCIPQLWVCDNQADCEDHSDESIERCGYDAKAFNTCAAHEFQCGNGECILLNWKCDGDEDCKDKSDEQDCPLVTCRPDEFQCGDGTCIHGAKQCDKVHDCPDNSDEAGCVQESACESPSKFQCKSGECIDGGKVCDLHRDCRDWSDEPLKECGINECSLNNGGCSHICKDLKIGYECECPPGYKLLDKKTCGDIDECENPDACSQICINYKGDYKCECYEGYEMDTLSKNCKAVGKSPYLIFTNRHEVRKIDLVKRDYSRIIPMLKNVVALDVEVATNRIYWCDLFYRKIYSAYIDKASDTAEQVILIDSQLNSPEGVAIDWVHKNIYWTDSGNKTISVATADGSRRRTVFNSDLSEPRAIAVDPTRRFMYWSDWGDKAKIEKAGLNGVGRQVLVSDNIEWPNGITLDLLNQRLYWVDSKLHSLSCIDFNGSNREVLISSIDDLSHPFGLAVFEDRVFWTDLENEAIFSANRLSGLDISVLAENLNNPHDIVVFHELKQPKAPDSCELSPQPNGGCEYLCLPAPHISPRSPKFTCACPDNMWLGPDMKKCYKELPTTPATVEVPTTTTSHPAATSTVTVTGSANTTTAVIPRAVSEATTAIPSSHSTTSLLIDSEMTTGNSNLSQHYSNNGQGFDSTVTAAVIGIVIPVVVIGLLCMGGYLIWRNWKRKNTKSMNFDNPVYRKTTEEEDEDEIHIGRTAQIGHVYPARVALSLEDDGLP.

Residues 1–24 form the signal peptide; sequence MCRPALARLLLLQLLLLKLYLGKG. The Extracellular segment spans residues 25-838; that stretch reads AMKECDKDQF…GQGFDSTVTA (814 aa). 5 LDL-receptor class A domains span residues 28–64, 67–105, 108–146, 148–184, and 187–225; these read ECDK…ADCP, TCAE…AACT, VCPA…AGCA, ACSP…KKCS, and TCSP…ERCG. 29 cysteine pairs are disulfide-bonded: Cys-29–Cys-41, Cys-36–Cys-54, Cys-48–Cys-63, Cys-68–Cys-80, Cys-75–Cys-93, Cys-87–Cys-104, Cys-109–Cys-123, Cys-116–Cys-136, Cys-130–Cys-145, Cys-149–Cys-161, Cys-156–Cys-174, Cys-168–Cys-183, Cys-188–Cys-200, Cys-195–Cys-213, Cys-207–Cys-224, Cys-241–Cys-259, Cys-253–Cys-268, Cys-273–Cys-285, Cys-280–Cys-298, Cys-292–Cys-307, Cys-313–Cys-326, Cys-321–Cys-339, Cys-333–Cys-350, Cys-355–Cys-366, Cys-362–Cys-375, Cys-377–Cys-389, Cys-395–Cys-405, Cys-401–Cys-414, and Cys-416–Cys-429. Ca(2+)-binding residues include Trp-46, Asp-49, Asp-51, Asp-53, Asp-59, and Glu-60. The N-linked (GlcNAc...) asparagine glycan is linked to Asn-158. Asn-196 is a glycosylation site (N-linked (GlcNAc...) asparagine). LDL-receptor class A domains lie at 272-308 and 312-351; these read TCRP…AGCV and ACES…KECG. The region spanning 346–390 is the EGF-like 1 domain; it reads PLKECGINECSLNNGGCSHICKDLKIGYECECPPGYKLLDKKTCG. The region spanning 391–430 is the EGF-like 2; calcium-binding domain; the sequence is DIDECENPDACSQICINYKGDYKCECYEGYEMDTLSKNCK. LDL-receptor class B repeat units lie at residues 476 to 522, 523 to 565, 566 to 609, 610 to 652, and 653 to 695; these read NRIY…DWVH, KNIY…DPTR, RFMY…DLLN, QRLY…AVFE, and DRVF…FHEL. A glycan (N-linked (GlcNAc...) asparagine) is linked at Asn-532. Residue Asn-628 is glycosylated (N-linked (GlcNAc...) asparagine). A clustered O-linked oligosaccharides region spans residues 754–813; it reads TTPATVEVPTTTTSHPAATSTVTVTGSANTTTAVIPRAVSEATTAIPSSHSTTSLLIDSE. Asn-782 and Asn-820 each carry an N-linked (GlcNAc...) asparagine glycan. The chain crosses the membrane as a helical span at residues 839 to 861; it reads AVIGIVIPVVVIGLLCMGGYLIW. Topologically, residues 862–917 are cytoplasmic; the sequence is RNWKRKNTKSMNFDNPVYRKTTEEEDEDEIHIGRTAQIGHVYPARVALSLEDDGLP.

The protein belongs to the LDLR family. In terms of assembly, homooligomer. As to expression, mainly in brain.

The protein resides in the cell membrane. Cell surface receptor for Reelin (RELN) and apolipoprotein E (apoE)-containing ligands. Also binds alpha2-macroglobulin. LRP8 participates in transmitting the extracellular Reelin signal to intracellular signaling processes, by binding to DAB1 on its cytoplasmic tail. Reelin acts via both the VLDL receptor (VLDLR) and LRP8 to regulate DAB1 tyrosine phosphorylation and microtubule function in neurons. LRP8 has higher affinity for Reelin than VLDLR. LRP8 is thus a key component of the Reelin pathway which governs neuronal layering of the forebrain during embryonic brain development. Not required for endocytic uptake of SEPP1 in the kidney which is mediated by LRP2. The chain is Low-density lipoprotein receptor-related protein 8 (LRP8) from Gallus gallus (Chicken).